The following is an 887-amino-acid chain: Alanine--tRNA ligase (887 aa).

Zn(2+) contacts are provided by His-581, His-585, Cys-683, and His-687.

It belongs to the class-II aminoacyl-tRNA synthetase family. The cofactor is Zn(2+).

Its subcellular location is the cytoplasm. It catalyses the reaction tRNA(Ala) + L-alanine + ATP = L-alanyl-tRNA(Ala) + AMP + diphosphate. Catalyzes the attachment of alanine to tRNA(Ala) in a two-step reaction: alanine is first activated by ATP to form Ala-AMP and then transferred to the acceptor end of tRNA(Ala). Also edits incorrectly charged Ser-tRNA(Ala) and Gly-tRNA(Ala) via its editing domain. The sequence is that of Alanine--tRNA ligase from Ehrlichia ruminantium (strain Welgevonden).